A 1582-amino-acid chain; its full sequence is SET-binding protein (1582 aa).

Disordered stretches follow at residues methionine 1 to glycine 76, isoleucine 124 to alanine 246, leucine 278 to serine 416, and serine 446 to glutamate 513. The span at glutamate 18–serine 27 shows a compositional bias: polar residues. Residues glycine 57 to valine 74 show a composition bias toward basic and acidic residues. Polar residues-rich tracts occupy residues isoleucine 126–serine 141 and methionine 213–phenylalanine 229. Positions leucine 278 to serine 298 are enriched in low complexity. Basic and acidic residues predominate over residues glutamate 356–tyrosine 365. A compositionally biased stretch (polar residues) spans aspartate 368–asparagine 388. Over residues glycine 450 to glutamate 465 the composition is skewed to basic and acidic residues. The segment at residues lysine 575 to leucine 587 is a DNA-binding region (a.T hook 1). Disordered stretches follow at residues glycine 595–arginine 617 and arginine 709–glutamate 787. The segment covering leucine 770–glutamate 787 has biased composition (polar residues). Lysine 808 carries the N6-acetyllysine modification. The span at serine 845–aspartate 871 shows a compositional bias: polar residues. The segment at serine 845–arginine 880 is disordered. Positions lysine 1007–threonine 1019 form a DNA-binding region, a.T hook 2. 6 disordered regions span residues valine 1128 to leucine 1155, serine 1182 to asparagine 1215, alanine 1236 to glutamate 1265, glutamine 1429 to methionine 1461, leucine 1470 to serine 1489, and glutamate 1507 to proline 1582. Over residues arginine 1137–lysine 1150 the composition is skewed to basic residues. The segment covering serine 1182–lysine 1196 has biased composition (basic and acidic residues). Basic residues predominate over residues valine 1439–lysine 1448. The a.T hook 3 DNA-binding region spans lysine 1440–glutamine 1452. Pro residues-rich tracts occupy residues proline 1509 to proline 1533 and glutamine 1546 to leucine 1559.

Interacts with SET.

The protein resides in the nucleus. The polypeptide is SET-binding protein (Setbp1) (Mus musculus (Mouse)).